Consider the following 170-residue polypeptide: Flavodoxin (170 aa).

A Flavodoxin-like domain is found at 4-165 (IGLFYGTQTG…RIKTWVSQLK (162 aa)).

This sequence belongs to the flavodoxin family. FMN serves as cofactor.

Low-potential electron donor to a number of redox enzymes. This chain is Flavodoxin (isiB), found in Synechococcus elongatus (strain ATCC 33912 / PCC 7942 / FACHB-805) (Anacystis nidulans R2).